A 387-amino-acid polypeptide reads, in one-letter code: S-adenosylmethionine synthase (387 aa).

Histidine 17 contributes to the ATP binding site. Residue aspartate 19 coordinates Mg(2+). Glutamate 45 serves as a coordination point for K(+). Positions 58 and 101 each coordinate L-methionine. The tract at residues 101–111 (QSPDIAQGVDR) is flexible loop. Residues 168-170 (DAK), 234-235 (RF), aspartate 243, 249-250 (RK), alanine 266, and lysine 270 contribute to the ATP site. Position 243 (aspartate 243) interacts with L-methionine. Lysine 274 is an L-methionine binding site.

Belongs to the AdoMet synthase family. Homotetramer; dimer of dimers. Requires Mg(2+) as cofactor. The cofactor is K(+).

The protein localises to the cytoplasm. It catalyses the reaction L-methionine + ATP + H2O = S-adenosyl-L-methionine + phosphate + diphosphate. It participates in amino-acid biosynthesis; S-adenosyl-L-methionine biosynthesis; S-adenosyl-L-methionine from L-methionine: step 1/1. Functionally, catalyzes the formation of S-adenosylmethionine (AdoMet) from methionine and ATP. The overall synthetic reaction is composed of two sequential steps, AdoMet formation and the subsequent tripolyphosphate hydrolysis which occurs prior to release of AdoMet from the enzyme. In Bordetella petrii (strain ATCC BAA-461 / DSM 12804 / CCUG 43448), this protein is S-adenosylmethionine synthase.